The sequence spans 166 residues: 3-isopropylmalate dehydratase small subunit (166 aa).

Belongs to the LeuD family. LeuD type 2 subfamily. As to quaternary structure, heterodimer of LeuC and LeuD.

It carries out the reaction (2R,3S)-3-isopropylmalate = (2S)-2-isopropylmalate. It functions in the pathway amino-acid biosynthesis; L-leucine biosynthesis; L-leucine from 3-methyl-2-oxobutanoate: step 2/4. In terms of biological role, catalyzes the isomerization between 2-isopropylmalate and 3-isopropylmalate, via the formation of 2-isopropylmaleate. The sequence is that of 3-isopropylmalate dehydratase small subunit from Nautilia profundicola (strain ATCC BAA-1463 / DSM 18972 / AmH).